The sequence spans 599 residues: Proline dehydrogenase 1, mitochondrial (599 aa).

Disordered regions lie at residues 20–39 and 152–180; these read STKPQAQEQPPASPEALRGC and EEAERKEMESCTSEAERDGSGANKREKQY. The span at 23-39 shows a compositional bias: low complexity; the sequence is PQAQEQPPASPEALRGC. Positions 153–180 are enriched in basic and acidic residues; the sequence is EAERKEMESCTSEAERDGSGANKREKQY. An N6-acetyllysine mark is found at K356, K367, and K485.

It belongs to the proline oxidase family. FAD is required as a cofactor. Expressed in liver, kidney, heart and to a lesser extent in brain, lung and muscle.

The protein resides in the mitochondrion matrix. It carries out the reaction L-proline + a quinone = (S)-1-pyrroline-5-carboxylate + a quinol + H(+). It functions in the pathway amino-acid degradation; L-proline degradation into L-glutamate; L-glutamate from L-proline: step 1/2. Converts proline to delta-1-pyrroline-5-carboxylate. The polypeptide is Proline dehydrogenase 1, mitochondrial (Prodh) (Mus musculus (Mouse)).